A 207-amino-acid chain; its full sequence is LexA repressor (207 aa).

A DNA-binding region (H-T-H motif) is located at residues arginine 28–lysine 48. Residues serine 124 and lysine 161 each act as for autocatalytic cleavage activity in the active site.

It belongs to the peptidase S24 family. Homodimer.

The catalysed reaction is Hydrolysis of Ala-|-Gly bond in repressor LexA.. Represses a number of genes involved in the response to DNA damage (SOS response), including recA and lexA. In the presence of single-stranded DNA, RecA interacts with LexA causing an autocatalytic cleavage which disrupts the DNA-binding part of LexA, leading to derepression of the SOS regulon and eventually DNA repair. This Vibrio vulnificus (strain CMCP6) protein is LexA repressor.